The chain runs to 709 residues: Disintegrin and metalloproteinase domain-containing protein 5 (709 aa).

A propeptide spanning residues 1-98 (MKTPISSILK…TLSGFIHVIY (98 aa)) is cleaved from the precursor. The Extracellular segment spans residues 1–649 (MKTPISSILK…QQNRGIHPKQ (649 aa)). The Peptidase M12B domain occupies 141-334 (RYIKTDIVVD…QDLECLQDLP (194 aa)). 7 disulfide bridges follow: C247–C329, C289–C314, C291–C296, C406–C426, C585–C597, C591–C603, and C605–C614. The Disintegrin domain occupies 346 to 434 (RRICGNGILE…YCVPDTFARN (89 aa)). The 35-residue stretch at 581 to 615 (DFQQCNTSRDCNDHGVCNNFNHCHCDKGYNPPYCE) folds into the EGF-like; calcium-binding domain. Residues 650 to 670 (QLQLILYITLPLIMIISAVFI) form a helical membrane-spanning segment. The Cytoplasmic portion of the chain corresponds to 671 to 709 (KQSKLSRLCGRERSEGTSCITEDSVSNTKMTTNEGSTLH). Residues 690–709 (ITEDSVSNTKMTTNEGSTLH) are disordered.

In terms of assembly, interacts with TEX101. In terms of tissue distribution, detected in testis.

The protein resides in the membrane. This is a non catalytic metalloprotease-like protein. May play a role in sperm-egg fusion. The protein is Disintegrin and metalloproteinase domain-containing protein 5 (Adam5) of Rattus norvegicus (Rat).